Reading from the N-terminus, the 452-residue chain is MQTVLAKIVADKAIWVEARKQQQPLASFQNEIQPSTRHFYDALQGARTAFILECKKASPSKGVIRDDFDPARIASIYQHYASAISVLTDEKYFQGSFDFLPVVSQSAPQPILCKDFIIDPYQIYLARYYQADACLLMLSVLDDEQYRQLSAVAHSLKMGVLTEISNDEERERAIALGAKVVGINNRDLRDLSIDLNRTRQLAPKLGHGVTVISESGINTYGQVRELSHFANGFLIGSALMAHDDLNAAVRRVLLGENKVCGLTRAQDAKAACDAGAIYGGLIFVPSSPRAVSVEQAREVISGAPLQYVGVFKNADIADVCQKAAVLSLSAVQLHGSEDQAYVNALREALPRNVQIWKALSVSNALPARDYHHVDKYIFDNGQGGSGQRFDWSLLQGQPLDDVLLAGGLAADNCVQAAQVGCAGLDFNSGVESQPGIKDARLLASVFQTLRAY.

Residues 1-256 (MQTVLAKIVA…AAVRRVLLGE (256 aa)) are indole-3-glycerol phosphate synthase. An N-(5'-phosphoribosyl)anthranilate isomerase region spans residues 257-452 (NKVCGLTRAQ…ASVFQTLRAY (196 aa)).

This sequence in the N-terminal section; belongs to the TrpC family. It in the C-terminal section; belongs to the TrpF family. As to quaternary structure, monomer.

The catalysed reaction is N-(5-phospho-beta-D-ribosyl)anthranilate = 1-(2-carboxyphenylamino)-1-deoxy-D-ribulose 5-phosphate. The enzyme catalyses 1-(2-carboxyphenylamino)-1-deoxy-D-ribulose 5-phosphate + H(+) = (1S,2R)-1-C-(indol-3-yl)glycerol 3-phosphate + CO2 + H2O. It functions in the pathway amino-acid biosynthesis; L-tryptophan biosynthesis; L-tryptophan from chorismate: step 3/5. The protein operates within amino-acid biosynthesis; L-tryptophan biosynthesis; L-tryptophan from chorismate: step 4/5. Functionally, bifunctional enzyme that catalyzes two sequential steps of tryptophan biosynthetic pathway. The first reaction is catalyzed by the isomerase, coded by the TrpF domain; the second reaction is catalyzed by the synthase, coded by the TrpC domain. This Salmonella typhi protein is Tryptophan biosynthesis protein TrpCF (trpC).